The primary structure comprises 99 residues: Signal recognition particle 19 kDa protein (99 aa).

This sequence belongs to the SRP19 family. Part of the signal recognition particle protein translocation system, which is composed of SRP and FtsY. Archaeal SRP consists of a 7S RNA molecule of 300 nucleotides and two protein subunits: SRP54 and SRP19.

The protein localises to the cytoplasm. Its function is as follows. Involved in targeting and insertion of nascent membrane proteins into the cytoplasmic membrane. Binds directly to 7S RNA and mediates binding of the 54 kDa subunit of the SRP. The sequence is that of Signal recognition particle 19 kDa protein from Pyrococcus abyssi (strain GE5 / Orsay).